The following is a 424-amino-acid chain: Testican-2 (424 aa).

Residues M1 to A22 form the signal peptide. Residue S72 is modified to Phosphoserine; by FAM20C. Intrachain disulfides connect C90-C101, C95-C111, C136-C166, C139-C159, and C148-C180. A Kazal-like domain is found at G130–C182. The N-linked (GlcNAc...) asparagine glycan is linked to N225. In terms of domain architecture, Thyroglobulin type-1 spans K310–C376. Intrachain disulfides connect C313-C337, C348-C355, and C357-C376. O-linked (Xyl...) (glycosaminoglycan) serine glycosylation is found at S383 and S388. The interval G387–W424 is disordered. The span at W392–W424 shows a compositional bias: acidic residues.

Post-translationally, contains chondroitin sulfate and heparan sulfate O-linked oligosaccharides. Highly expressed in brain. Also found in lung and testis.

The protein localises to the secreted. Its subcellular location is the extracellular space. It is found in the extracellular matrix. Its function is as follows. May participate in diverse steps of neurogenesis. Binds calcium. This chain is Testican-2 (SPOCK2), found in Homo sapiens (Human).